The sequence spans 117 residues: Acidic phospholipase A2 PA-1G (117 aa).

7 disulfide bridges follow: Cys11/Cys71, Cys27/Cys117, Cys29/Cys45, Cys44/Cys98, Cys51/Cys91, Cys60/Cys84, and Cys78/Cys89. Ca(2+) is bound by residues Tyr28, Gly30, and Gly32. His48 is an active-site residue. Asp49 contacts Ca(2+). Residue Asp92 is part of the active site.

The protein belongs to the phospholipase A2 family. Group I subfamily. D49 sub-subfamily. It depends on Ca(2+) as a cofactor. Expressed by the venom gland.

The protein resides in the secreted. The enzyme catalyses a 1,2-diacyl-sn-glycero-3-phosphocholine + H2O = a 1-acyl-sn-glycero-3-phosphocholine + a fatty acid + H(+). Its function is as follows. PLA2 catalyzes the calcium-dependent hydrolysis of the 2-acyl groups in 3-sn-phosphoglycerides. This Pseudechis australis (Mulga snake) protein is Acidic phospholipase A2 PA-1G.